The chain runs to 163 residues: uncharacterized protein (163 aa).

The interval 23-113 is disordered; that stretch reads DFPEEPPLWV…QVADGVHSQQ (91 aa). The residue at position 102 (Ser102) is a Phosphoserine.

This is an uncharacterized protein from Mus musculus (Mouse).